We begin with the raw amino-acid sequence, 132 residues long: Small ribosomal subunit protein uS19 (132 aa).

This sequence belongs to the universal ribosomal protein uS19 family.

Its function is as follows. Protein S19 forms a complex with S13 that binds strongly to the 16S ribosomal RNA. The polypeptide is Small ribosomal subunit protein uS19 (rps19) (Pyrococcus abyssi (strain GE5 / Orsay)).